Here is a 61-residue protein sequence, read N- to C-terminus: MAKDFINGKRTQFGNKRSHALNSSRRSWKPNLQKVTILVNGKPKKVYVSARTLKSGKVTRV.

A disordered region spans residues 1–26 (MAKDFINGKRTQFGNKRSHALNSSRR). Residues 9–25 (KRTQFGNKRSHALNSSR) are compositionally biased toward polar residues.

Belongs to the bacterial ribosomal protein bL28 family.

The protein is Large ribosomal subunit protein bL28 of Limosilactobacillus reuteri (strain DSM 20016) (Lactobacillus reuteri).